Consider the following 506-residue polypeptide: DEAD-box ATP-dependent RNA helicase CshA (506 aa).

The Q motif motif lies at 2–30 (QNFKELGISDNTVQSLESMGFKEPTPIQK). The Helicase ATP-binding domain maps to 33–203 (IPYALQGIDI…QQFMKSPKII (171 aa)). Residue 46-53 (AQTGTGKT) coordinates ATP. The short motif at 150-153 (DEAD) is the DEAD box element. The region spanning 214-375 (QIEEFYTIVK…LRPPHRKEVL (162 aa)) is the Helicase C-terminal domain. The segment at 436–506 (EKPLSRKGRN…KGRTFADHQK (71 aa)) is disordered. The span at 468–480 (KRSKGYSSKKKST) shows a compositional bias: basic residues.

This sequence belongs to the DEAD box helicase family. CshA subfamily. In terms of assembly, oligomerizes, may be a member of the RNA degradosome.

The protein localises to the cytoplasm. It carries out the reaction ATP + H2O = ADP + phosphate + H(+). Its function is as follows. DEAD-box RNA helicase possibly involved in RNA degradation. Unwinds dsRNA in both 5'- and 3'-directions, has RNA-dependent ATPase activity. The chain is DEAD-box ATP-dependent RNA helicase CshA from Staphylococcus aureus (strain bovine RF122 / ET3-1).